Consider the following 204-residue polypeptide: CASP-like protein 1U3 (204 aa).

The Cytoplasmic portion of the chain corresponds to 1–19; that stretch reads MCEGEKKKDSSSGALYCVN. A helical transmembrane segment spans residues 20–40; the sequence is LALRIVVLGLAVAAAALMATA. The Extracellular portion of the chain corresponds to 41–63; sequence SQCTIFLYYGGPLHTITYKDFGP. Residues 64-84 form a helical membrane-spanning segment; the sequence is FVYLVVASSIGAFMEAIAIFL. The Cytoplasmic segment spans residues 85–97; sequence TICKKKDGTPAKV. A helical transmembrane segment spans residues 98–118; sequence LLPLLDAAVPVLLYSATAAAF. Over 119-146 the chain is Extracellular; the sequence is AAGDMSYCAVGKRVGVCTTAAAGNFCNQ. The chain crosses the membrane as a helical span at residues 147-167; the sequence is VHIAMYVSLAAGVALLVAEIV. At 168 to 204 the chain is on the cytoplasmic side; it reads KHWPDSGKKKEGGGGGCGSDSDSDKSTPCHHGCHSKH. Residues 173-204 are disordered; it reads SGKKKEGGGGGCGSDSDSDKSTPCHHGCHSKH.

The protein belongs to the Casparian strip membrane proteins (CASP) family. Homodimer and heterodimers.

It localises to the cell membrane. In Oryza sativa subsp. japonica (Rice), this protein is CASP-like protein 1U3.